We begin with the raw amino-acid sequence, 736 residues long: DNA topoisomerase 1 (736 aa).

Residues 2-113 (KHLIIVESPA…SYPRIVFHEI (112 aa)) enclose the Toprim domain. 2 residues coordinate Mg(2+): Glu8 and Asp82. Residues 129 to 552 (DMSKVNAQQA…DFYYPFMDKI (424 aa)) enclose the Topo IA-type catalytic domain. Positions 163–168 (SAGRVQ) are interaction with DNA. Catalysis depends on Tyr297, which acts as the O-(5'-phospho-DNA)-tyrosine intermediate. 4 consecutive C4-type zinc fingers follow at residues 572 to 598 (CPKC…YPKC), 616 to 642 (CEKC…YPEC), 663 to 689 (CPEC…YPKC), and 702 to 725 (CEKC…CIKC).

This sequence belongs to the type IA topoisomerase family. Monomer. Requires Mg(2+) as cofactor.

The enzyme catalyses ATP-independent breakage of single-stranded DNA, followed by passage and rejoining.. Releases the supercoiling and torsional tension of DNA, which is introduced during the DNA replication and transcription, by transiently cleaving and rejoining one strand of the DNA duplex. Introduces a single-strand break via transesterification at a target site in duplex DNA. The scissile phosphodiester is attacked by the catalytic tyrosine of the enzyme, resulting in the formation of a DNA-(5'-phosphotyrosyl)-enzyme intermediate and the expulsion of a 3'-OH DNA strand. The free DNA strand then undergoes passage around the unbroken strand, thus removing DNA supercoils. Finally, in the religation step, the DNA 3'-OH attacks the covalent intermediate to expel the active-site tyrosine and restore the DNA phosphodiester backbone. The chain is DNA topoisomerase 1 from Helicobacter pylori (strain ATCC 700392 / 26695) (Campylobacter pylori).